Here is a 539-residue protein sequence, read N- to C-terminus: CTP synthase (539 aa).

Residues 1 to 269 (MSATKYIFVT…DERVLSKLKL (269 aa)) form an amidoligase domain region. A CTP-binding site is contributed by S15. Position 15 (S15) interacts with UTP. ATP is bound at residue 16–21 (SLGKGI). Residue Y56 participates in L-glutamine binding. Residue D73 participates in ATP binding. Mg(2+) is bound by residues D73 and E143. CTP contacts are provided by residues 150–152 (DIE), 190–195 (KTKPTQ), and K226. UTP contacts are provided by residues 190-195 (KTKPTQ) and K226. The Glutamine amidotransferase type-1 domain occupies 295-537 (NIALVGKYVE…VKAANDFAKG (243 aa)). Position 357 (G357) interacts with L-glutamine. The active-site Nucleophile; for glutamine hydrolysis is the C384. L-glutamine contacts are provided by residues 385-388 (LGMQ), E408, and R465. Catalysis depends on residues H510 and E512.

It belongs to the CTP synthase family. As to quaternary structure, homotetramer.

The enzyme catalyses UTP + L-glutamine + ATP + H2O = CTP + L-glutamate + ADP + phosphate + 2 H(+). The catalysed reaction is L-glutamine + H2O = L-glutamate + NH4(+). It carries out the reaction UTP + NH4(+) + ATP = CTP + ADP + phosphate + 2 H(+). The protein operates within pyrimidine metabolism; CTP biosynthesis via de novo pathway; CTP from UDP: step 2/2. With respect to regulation, allosterically activated by GTP, when glutamine is the substrate; GTP has no effect on the reaction when ammonia is the substrate. The allosteric effector GTP functions by stabilizing the protein conformation that binds the tetrahedral intermediate(s) formed during glutamine hydrolysis. Inhibited by the product CTP, via allosteric rather than competitive inhibition. Functionally, catalyzes the ATP-dependent amination of UTP to CTP with either L-glutamine or ammonia as the source of nitrogen. Regulates intracellular CTP levels through interactions with the four ribonucleotide triphosphates. The sequence is that of CTP synthase from Cytophaga hutchinsonii (strain ATCC 33406 / DSM 1761 / CIP 103989 / NBRC 15051 / NCIMB 9469 / D465).